The chain runs to 425 residues: Queuine tRNA-ribosyltransferase accessory subunit 2 (425 aa).

A disordered region spans residues 302–323 (QNGAQDLEKNSPEEDQEEEVVK). Residues C351, C353, C356, and H382 each contribute to the Zn(2+) site.

It belongs to the queuine tRNA-ribosyltransferase family. QTRT2 subfamily. As to quaternary structure, heterodimer of a catalytic subunit QTRT1 and an accessory subunit QTRT2. The cofactor is Zn(2+).

The protein localises to the cytoplasm. It localises to the mitochondrion outer membrane. Non-catalytic subunit of the queuine tRNA-ribosyltransferase (TGT) that catalyzes the base-exchange of a guanine (G) residue with queuine (Q) at position 34 (anticodon wobble position) in tRNAs with GU(N) anticodons (tRNA-Asp, -Asn, -His and -Tyr), resulting in the hypermodified nucleoside queuosine (7-(((4,5-cis-dihydroxy-2-cyclopenten-1-yl)amino)methyl)-7-deazaguanosine). This Gallus gallus (Chicken) protein is Queuine tRNA-ribosyltransferase accessory subunit 2.